The following is a 605-amino-acid chain: Aspartate--tRNA(Asp/Asn) ligase (605 aa).

Glu-186 is an L-aspartate binding site. The aspartate stretch occupies residues 210-213; it reads QQFK. Residues Arg-232 and His-460 each contribute to the L-aspartate site. 232 to 234 is a binding site for ATP; sequence RDE. Glu-494 contributes to the ATP binding site. Arg-501 provides a ligand contact to L-aspartate. 546–549 provides a ligand contact to ATP; sequence GLDR.

Belongs to the class-II aminoacyl-tRNA synthetase family. Type 1 subfamily. As to quaternary structure, homodimer.

The protein resides in the cytoplasm. The enzyme catalyses tRNA(Asx) + L-aspartate + ATP = L-aspartyl-tRNA(Asx) + AMP + diphosphate. In terms of biological role, aspartyl-tRNA synthetase with relaxed tRNA specificity since it is able to aspartylate not only its cognate tRNA(Asp) but also tRNA(Asn). Reaction proceeds in two steps: L-aspartate is first activated by ATP to form Asp-AMP and then transferred to the acceptor end of tRNA(Asp/Asn). This is Aspartate--tRNA(Asp/Asn) ligase from Chlorobium chlorochromatii (strain CaD3).